We begin with the raw amino-acid sequence, 470 residues long: Aldehyde dehydrogenase family 3 comG (470 aa).

196–201 (GSVKVG) lines the NAD(+) pocket. Catalysis depends on residues Glu218 and Cys252.

It belongs to the aldehyde dehydrogenase family.

The protein localises to the cytoplasm. The enzyme catalyses an aldehyde + NADP(+) + H2O = a carboxylate + NADPH + 2 H(+). The catalysed reaction is an aldehyde + NAD(+) + H2O = a carboxylate + NADH + 2 H(+). In Dictyostelium discoideum (Social amoeba), this protein is Aldehyde dehydrogenase family 3 comG (comG).